A 112-amino-acid chain; its full sequence is T cell receptor alpha variable 2 (112 aa).

Residues 1–25 form the signal peptide; that stretch reads MALQSTLGAVWLGLLLNSLWKVAES. One can recognise an Ig-like domain in the interval 26–112; sequence KDQVFQPSTV…DAAVYYCAVE (87 aa). A disulfide bridge connects residues cysteine 47 and cysteine 109. 2 N-linked (GlcNAc...) asparagine glycosylation sites follow: asparagine 48 and asparagine 84.

Alpha-beta TR is a heterodimer composed of an alpha and beta chain; disulfide-linked. The alpha-beta TR is associated with the transmembrane signaling CD3 coreceptor proteins to form the TR-CD3 (TcR or TCR). The assembly of alpha-beta TR heterodimers with CD3 occurs in the endoplasmic reticulum where a single alpha-beta TR heterodimer associates with one CD3D-CD3E heterodimer, one CD3G-CD3E heterodimer and one CD247 homodimer forming a stable octameric structure. CD3D-CD3E and CD3G-CD3E heterodimers preferentially associate with TR alpha and TR beta chains, respectively. The association of the CD247 homodimer is the last step of TcR assembly in the endoplasmic reticulum and is required for transport to the cell surface.

Its subcellular location is the cell membrane. In terms of biological role, v region of the variable domain of T cell receptor (TR) alpha chain that participates in the antigen recognition. Alpha-beta T cell receptors are antigen specific receptors which are essential to the immune response and are present on the cell surface of T lymphocytes. Recognize peptide-major histocompatibility (MH) (pMH) complexes that are displayed by antigen presenting cells (APC), a prerequisite for efficient T cell adaptive immunity against pathogens. Binding of alpha-beta TR to pMH complex initiates TR-CD3 clustering on the cell surface and intracellular activation of LCK that phosphorylates the ITAM motifs of CD3G, CD3D, CD3E and CD247 enabling the recruitment of ZAP70. In turn ZAP70 phosphorylates LAT, which recruits numerous signaling molecules to form the LAT signalosome. The LAT signalosome propagates signal branching to three major signaling pathways, the calcium, the mitogen-activated protein kinase (MAPK) kinase and the nuclear factor NF-kappa-B (NF-kB) pathways, leading to the mobilization of transcription factors that are critical for gene expression and essential for T cell growth and differentiation. The T cell repertoire is generated in the thymus, by V-(D)-J rearrangement. This repertoire is then shaped by intrathymic selection events to generate a peripheral T cell pool of self-MH restricted, non-autoaggressive T cells. Post-thymic interaction of alpha-beta TR with the pMH complexes shapes TR structural and functional avidity. The chain is T cell receptor alpha variable 2 from Homo sapiens (Human).